A 261-amino-acid polypeptide reads, in one-letter code: uncharacterized protein (261 aa).

The signal sequence occupies residues 1-22 (MKYYGKCISYISILILTFFIGG). Cys23 carries N-palmitoyl cysteine lipidation. Cys23 carries the S-diacylglycerol cysteine lipid modification.

This sequence belongs to the staphylococcal tandem lipoprotein family.

The protein resides in the cell membrane. This is an uncharacterized protein from Staphylococcus epidermidis (strain ATCC 12228 / FDA PCI 1200).